A 28-amino-acid polypeptide reads, in one-letter code: Kappa-stichotoxin-Shd1a/kappa-stichotoxin-Shd1b (28 aa).

Pro6 carries the 4-hydroxyproline; in form SHTX-1 (Shd1a) modification. 2 disulfide bridges follow: Cys7/Cys19 and Cys10/Cys25.

This sequence belongs to the sea anemone BBH family. Occurs in 2 forms which differ in the post-translational modification of Pro-6. In form SHTX-1 (Shd1a) Pro-6 is a hydroxyproline while in form SHTX-2 (Shd1b) Pro-6 is unmodified.

The protein resides in the secreted. It localises to the nematocyst. Its function is as follows. Kappa-stichotoxin-Shd1a: inhibits voltage-gated potassium channels (Kv). In terms of biological role, kappa-stichotoxin-Shd1b: inhibits voltage-gated potassium channels (Kv). This toxin inhibits the binding of 125I-alpha-dendrotoxin to synaptosomal membranes (IC(50)=270 nM). This chain is Kappa-stichotoxin-Shd1a/kappa-stichotoxin-Shd1b, found in Stichodactyla haddoni (Saddle carpet anemone).